Reading from the N-terminus, the 342-residue chain is Photosystem II assembly lipoprotein Ycf48 (342 aa).

The signal sequence occupies residues 1 to 28 (MPVKFPSLKFEQLKQLVLVAAIAVFCVS). Cys-29 is lipidated: N-palmitoyl cysteine. Cys-29 carries S-diacylglycerol cysteine lipidation. Residues 196–220 (RGNFYSTWAPGQTEWTPHNRNSSRR) carry the Arg-rich patch motif. Positions 340–342 (MVP) are excised as a propeptide.

It belongs to the Ycf48 family. Part of early PSII assembly complexes which includes D1 (psbA) and PsbI; not found in mature PSII. By two-hybrid analysis in yeast interacts with precursor and intermediate forms of D1, but less with mature D1. Binds to the lumenal side of PSI and PSII complexes. Coimmunoprecipitates with YidC. Purified chlorophyll- and carotenoid-containing photosystem II (PSII) assembly intermediate complex RCII* (iD1, D1, D2, PsbE, PsbF, PsbI, Ycf39, Ycf48, HliC and HliD). In terms of processing, the last 3 residues are removed in the mature protein.

Its subcellular location is the cellular thylakoid membrane. Functionally, a factor required for optimal assembly of photosystem II (PSII) which acts in the early stages of PSII assembly. Also plays a role in replacement of photodamaged D1 (psbA). May interact with precursor D1 to prevent its premature processing before association with D2 (psbD). May also play a role in chlorophyll insertion into chlorophyll-binding proteins. Increasing levels of chlorophyll precursors partially suppresses deletion of this protein, supporting the idea that Ycf48 assists YidC in synthesis of chlorophyll-binding proteins. The Ycf39-Hlip complex binds D1 at an early stage of PSII assembly along with Ycf48, ribosomes and ChlG, the last enzyme in chlorophyll biosynthesis; it may be involved in chlorophyll reuse and delivery to D1 in the initial stages of PSII assembly. In Synechocystis sp. (strain ATCC 27184 / PCC 6803 / Kazusa), this protein is Photosystem II assembly lipoprotein Ycf48.